The sequence spans 437 residues: Na(+)/H(+) antiporter NhaA (437 aa).

11 helical membrane passes run threonine 29–tryptophan 49, leucine 74–leucine 94, leucine 111–valine 131, glycine 139–glycine 159, leucine 168–glycine 188, valine 196–isoleucine 216, isoleucine 229–leucine 249, isoleucine 307–glycine 327, isoleucine 341–leucine 361, tryptophan 376–isoleucine 396, and leucine 411–leucine 431.

It belongs to the NhaA Na(+)/H(+) (TC 2.A.33) antiporter family.

The protein localises to the cell inner membrane. The catalysed reaction is Na(+)(in) + 2 H(+)(out) = Na(+)(out) + 2 H(+)(in). In terms of biological role, na(+)/H(+) antiporter that extrudes sodium in exchange for external protons. In Rhizobium meliloti (strain 1021) (Ensifer meliloti), this protein is Na(+)/H(+) antiporter NhaA.